Here is a 343-residue protein sequence, read N- to C-terminus: Tetraacyldisaccharide 4'-kinase (343 aa).

61-68 (GVGGNGKT) is a binding site for ATP.

This sequence belongs to the LpxK family.

It carries out the reaction a lipid A disaccharide + ATP = a lipid IVA + ADP + H(+). The protein operates within glycolipid biosynthesis; lipid IV(A) biosynthesis; lipid IV(A) from (3R)-3-hydroxytetradecanoyl-[acyl-carrier-protein] and UDP-N-acetyl-alpha-D-glucosamine: step 6/6. In terms of biological role, transfers the gamma-phosphate of ATP to the 4'-position of a tetraacyldisaccharide 1-phosphate intermediate (termed DS-1-P) to form tetraacyldisaccharide 1,4'-bis-phosphate (lipid IVA). This Colwellia psychrerythraea (strain 34H / ATCC BAA-681) (Vibrio psychroerythus) protein is Tetraacyldisaccharide 4'-kinase.